Reading from the N-terminus, the 669-residue chain is DNA mismatch repair protein MutL (669 aa).

Positions 356–371 (FEQRQNTENKQEKTFS) are enriched in basic and acidic residues. The tract at residues 356–379 (FEQRQNTENKQEKTFSSEESNSKP) is disordered.

The protein belongs to the DNA mismatch repair MutL/HexB family.

Its function is as follows. This protein is involved in the repair of mismatches in DNA. It is required for dam-dependent methyl-directed DNA mismatch repair. May act as a 'molecular matchmaker', a protein that promotes the formation of a stable complex between two or more DNA-binding proteins in an ATP-dependent manner without itself being part of a final effector complex. The sequence is that of DNA mismatch repair protein MutL from Staphylococcus aureus (strain MRSA252).